We begin with the raw amino-acid sequence, 141 residues long: Hemoglobin subunit alpha-1/2/3 (141 aa).

The Globin domain occupies 1–141 (VLSPADKTNV…VGTVLTSKYR (141 aa)). Residue S3 is modified to Phosphoserine. K7 bears the N6-succinyllysine mark. Position 8 is a phosphothreonine (T8). An N6-succinyllysine modification is found at K11. N6-acetyllysine; alternate is present on K16. K16 is subject to N6-succinyllysine; alternate. At Y24 the chain carries Phosphotyrosine. A Phosphoserine modification is found at S35. At K40 the chain carries N6-succinyllysine. S49 is subject to Phosphoserine. H58 contacts O2. H87 serves as a coordination point for heme b. Residue S102 is modified to Phosphoserine. A Phosphothreonine modification is found at T108. Phosphoserine is present on residues S124 and S131. T134 and T137 each carry phosphothreonine. At S138 the chain carries Phosphoserine.

This sequence belongs to the globin family. As to quaternary structure, heterotetramer of two alpha chains and two beta chains. In terms of tissue distribution, red blood cells.

Involved in oxygen transport from the lung to the various peripheral tissues. The sequence is that of Hemoglobin subunit alpha-1/2/3 from Macaca nemestrina (Pig-tailed macaque).